The following is a 171-amino-acid chain: Ponticulin-like protein F (171 aa).

A signal peptide spans 1-20; the sequence is MKFIPALIIFVFTIFALTNS. Glycine 149 carries GPI-like-anchor amidated glycine lipidation. Residues 150–171 constitute a propeptide, removed in mature form; the sequence is TSSTIVIPFALILSLLLSVITL.

The protein belongs to the ponticulin family. Post-translationally, the GPI-like-anchor contains a phosphoceramide group, rather than a phosphatidyl group.

The protein resides in the cell membrane. The sequence is that of Ponticulin-like protein F (ponF) from Dictyostelium discoideum (Social amoeba).